The chain runs to 293 residues: MKSTFLWTACVTPFNCSGDSIDYQSLQRLLTMQAETENGVVLLGSTGESLSLTDSEKRTLVEFVCELKLNTKIIIGVPGVNLYQTLEWLDFCKGMPIHGYLMTTPIYAKPGIMGQTLWFEKLLEKAHVPAMLYNIPSRAGVSLHAETVRNLSSHEKFWAIKDSSGTVDTLTQYKKVAPNIEVFCGDDNMIPDMAAKGAAGLVSVAANVWPSVVHEYVKQCMSGENPQADSWQQACKTLFTASNPIPTKALLHDIGLIEHKTVRLPLSTEDLPSIETLRQANKMILGWKELTNS.

A pyruvate-binding site is contributed by threonine 46. The active-site Proton donor/acceptor is the tyrosine 133. The active-site Schiff-base intermediate with substrate is the lysine 161. Valine 202 lines the pyruvate pocket.

The protein belongs to the DapA family. Homotetramer; dimer of dimers.

It localises to the cytoplasm. The enzyme catalyses L-aspartate 4-semialdehyde + pyruvate = (2S,4S)-4-hydroxy-2,3,4,5-tetrahydrodipicolinate + H2O + H(+). It functions in the pathway amino-acid biosynthesis; L-lysine biosynthesis via DAP pathway; (S)-tetrahydrodipicolinate from L-aspartate: step 3/4. Functionally, catalyzes the condensation of (S)-aspartate-beta-semialdehyde [(S)-ASA] and pyruvate to 4-hydroxy-tetrahydrodipicolinate (HTPA). This Wolbachia pipientis subsp. Culex pipiens (strain wPip) protein is 4-hydroxy-tetrahydrodipicolinate synthase.